The following is a 397-amino-acid chain: Phosphoglycerate kinase (397 aa).

Residues 21–23, Arg-36, 59–62, Arg-119, and Arg-152 contribute to the substrate site; these read DVN and HFGR. Residues Lys-202, Glu-324, and 354–357 each bind ATP; that span reads GGDT.

The protein belongs to the phosphoglycerate kinase family. In terms of assembly, monomer.

The protein resides in the cytoplasm. It catalyses the reaction (2R)-3-phosphoglycerate + ATP = (2R)-3-phospho-glyceroyl phosphate + ADP. It participates in carbohydrate degradation; glycolysis; pyruvate from D-glyceraldehyde 3-phosphate: step 2/5. The sequence is that of Phosphoglycerate kinase from Cereibacter sphaeroides (strain KD131 / KCTC 12085) (Rhodobacter sphaeroides).